The sequence spans 151 residues: FUN14 domain-containing protein 2 (151 aa).

Residues 1–42 lie on the Cytoplasmic side of the membrane; the sequence is MAANSQGNFDGKFEALDLAELTKKQPWWRKLFGQESGPSAEK. The helical transmembrane segment at 43–63 threads the bilayer; the sequence is YSVATQLVIGGVTGWCTGFVF. Residues 64–69 lie on the Mitochondrial intermembrane side of the membrane; the sequence is QKVGKL. The helical transmembrane segment at 70-90 threads the bilayer; the sequence is AATAVGGGFFLLQLANHTGYI. Residues 91–126 are Cytoplasmic-facing; that stretch reads KVDWQRVEKDMKKAKEQLKIRKNKQIPTEVKSKAEE. A helical transmembrane segment spans residues 127–147; sequence VVSFVKKNVLVTGGFFGGFLL. The Mitochondrial intermembrane portion of the chain corresponds to 148 to 151; the sequence is GMAS.

The protein belongs to the FUN14 family. As to expression, highly expressed in platelet (at protein level). Expressed in liver, brain, heart and muscle.

It is found in the mitochondrion outer membrane. The protein localises to the nucleus. In terms of biological role, binds directly and specifically 1,2-Diacyl-sn-glycero-3-phospho-(1'-myo-inositol-3',4',5'-bisphosphate) (PIP3) leading to the recruitment of PIP3 to mitochondria and may play a role in the regulation of the platelet activation via AKT/GSK3B/cGMP signaling pathways. May act as transcription factor that regulates SREBP1 (isoform SREBP-1C) expression in order to modulate triglyceride (TG) homeostasis in hepatocytes. The protein is FUN14 domain-containing protein 2 of Mus musculus (Mouse).